The sequence spans 105 residues: Protein LBH (105 aa).

The region spanning 18 to 104 (MTEVMMNTQP…CEETAKENKE (87 aa)) is the LBH domain. At Ser63 the chain carries Phosphoserine. Positions 86–96 (LVQEDEQDNCE) are enriched in acidic residues. The interval 86-105 (LVQEDEQDNCEETAKENKEQ) is disordered.

The protein belongs to the LBH family. As to expression, highly expressed in heart, and expressed at low levels in placenta, lung, skeletal muscle, kidney and liver.

The protein localises to the nucleus. The protein resides in the cytoplasm. In terms of biological role, transcriptional activator which may act in mitogen-activated protein kinase signaling pathway. In Homo sapiens (Human), this protein is Protein LBH.